We begin with the raw amino-acid sequence, 154 residues long: Large ribosomal subunit protein uL23 (154 aa).

A disordered region spans residues 1–39; it reads MAPAKADPSKKSDPKAQAAKVAKAVKSGSTLKKKSQKIR. The span at 15 to 26 shows a compositional bias: low complexity; sequence KAQAAKVAKAVK.

The protein belongs to the universal ribosomal protein uL23 family.

Functionally, this protein binds to a specific region on the 26S rRNA. This Nicotiana tabacum (Common tobacco) protein is Large ribosomal subunit protein uL23 (RPL23A).